A 29-amino-acid chain; its full sequence is MSDELIHVVIALGLVISFGLGAITAGVLR.

A helical membrane pass occupies residues Val8–Leu28.

The protein belongs to the inovirus G7P protein family.

The protein localises to the virion. Its subcellular location is the host membrane. May initiate with G9P the virion concomitant assembly-budding process, by interacting with the packaging signal of the viral genome. The assembly-budding takes place at the host inner membrane. In turn, G7P and G9P are present at the end of the filamentous virion that emerges first from the bacterial host. This chain is Tail virion protein G7P (VII), found in Escherichia coli (Bacteriophage I2-2).